The primary structure comprises 183 residues: Putative 3-methyladenine DNA glycosylase (183 aa).

Belongs to the DNA glycosylase MPG family.

In Rickettsia conorii (strain ATCC VR-613 / Malish 7), this protein is Putative 3-methyladenine DNA glycosylase.